The primary structure comprises 457 residues: Argininosuccinate lyase (457 aa).

It belongs to the lyase 1 family. Argininosuccinate lyase subfamily.

The protein resides in the cytoplasm. It carries out the reaction 2-(N(omega)-L-arginino)succinate = fumarate + L-arginine. It functions in the pathway amino-acid biosynthesis; L-arginine biosynthesis; L-arginine from L-ornithine and carbamoyl phosphate: step 3/3. This is Argininosuccinate lyase from Shigella dysenteriae serotype 1 (strain Sd197).